The following is a 310-amino-acid chain: Methionyl-tRNA formyltransferase (310 aa).

Residue 109–112 (SLLP) participates in (6S)-5,6,7,8-tetrahydrofolate binding. The disordered stretch occupies residues 283-310 (QPQGKKAMPAADWARGARIGDGERFGDD). Over residues 300–310 (RIGDGERFGDD) the composition is skewed to basic and acidic residues.

It belongs to the Fmt family.

The enzyme catalyses L-methionyl-tRNA(fMet) + (6R)-10-formyltetrahydrofolate = N-formyl-L-methionyl-tRNA(fMet) + (6S)-5,6,7,8-tetrahydrofolate + H(+). Functionally, attaches a formyl group to the free amino group of methionyl-tRNA(fMet). The formyl group appears to play a dual role in the initiator identity of N-formylmethionyl-tRNA by promoting its recognition by IF2 and preventing the misappropriation of this tRNA by the elongation apparatus. In Thermobifida fusca (strain YX), this protein is Methionyl-tRNA formyltransferase.